The following is a 274-amino-acid chain: Bis(5'-nucleosyl)-tetraphosphatase, symmetrical (274 aa).

It belongs to the Ap4A hydrolase family.

The enzyme catalyses P(1),P(4)-bis(5'-adenosyl) tetraphosphate + H2O = 2 ADP + 2 H(+). Its function is as follows. Hydrolyzes diadenosine 5',5'''-P1,P4-tetraphosphate to yield ADP. The chain is Bis(5'-nucleosyl)-tetraphosphatase, symmetrical from Shewanella baltica (strain OS195).